The primary structure comprises 424 residues: Serine--tRNA ligase (424 aa).

Residues 1–15 are compositionally biased toward basic and acidic residues; it reads MIDPKLLRTDPDAVR. A disordered region spans residues 1 to 27; it reads MIDPKLLRTDPDAVRRSQAARGEDSSV. L-serine is bound at residue 230-232; that stretch reads TSE. Residues 261–263 and valine 277 each bind ATP; that span reads RRE. Residue glutamate 284 participates in L-serine binding. 348 to 351 contributes to the ATP binding site; it reads EITS. L-serine is bound at residue threonine 382.

This sequence belongs to the class-II aminoacyl-tRNA synthetase family. Type-1 seryl-tRNA synthetase subfamily. As to quaternary structure, homodimer. The tRNA molecule binds across the dimer.

It is found in the cytoplasm. The catalysed reaction is tRNA(Ser) + L-serine + ATP = L-seryl-tRNA(Ser) + AMP + diphosphate + H(+). It catalyses the reaction tRNA(Sec) + L-serine + ATP = L-seryl-tRNA(Sec) + AMP + diphosphate + H(+). It functions in the pathway aminoacyl-tRNA biosynthesis; selenocysteinyl-tRNA(Sec) biosynthesis; L-seryl-tRNA(Sec) from L-serine and tRNA(Sec): step 1/1. Catalyzes the attachment of serine to tRNA(Ser). Is also able to aminoacylate tRNA(Sec) with serine, to form the misacylated tRNA L-seryl-tRNA(Sec), which will be further converted into selenocysteinyl-tRNA(Sec). This Cutibacterium acnes (strain DSM 16379 / KPA171202) (Propionibacterium acnes) protein is Serine--tRNA ligase.